Consider the following 446-residue polypeptide: NADH-ubiquinone oxidoreductase chain 4 (446 aa).

Transmembrane regions (helical) follow at residues 4–24, 56–76, 93–113, 114–134, 139–159, 182–202, 218–238, 245–265, 272–292, 297–317, 330–350, 373–393, and 426–446; these read IIFFLLFLIPFCFINNMYWMV, MLSYGLILLSLWICSLMLLAS, IIILLLLLILTFSSMSLFMFY, LFFESSLIPTLFLILGWGYQP, AGLYLLFYTLLVSLPMLIGIF, LLYFCLLCAFLVKMPMFLVHL, ILAGIMLKLGGYGMLRVISFL, YSFVWISISLVGGVLVSLVCL, ALIAYSSVAHMGIVLSGLLTM, LCGSYTLMIAHGLCSSGLFCL, MLINKGLLNFMPSMTLWWFLL, IVSWSWISMILLSFLSFFSAA, and LLHWLPLNLLILKSESFMLWL.

This sequence belongs to the complex I subunit 4 family.

It is found in the mitochondrion membrane. It carries out the reaction a ubiquinone + NADH + 5 H(+)(in) = a ubiquinol + NAD(+) + 4 H(+)(out). Core subunit of the mitochondrial membrane respiratory chain NADH dehydrogenase (Complex I) that is believed to belong to the minimal assembly required for catalysis. Complex I functions in the transfer of electrons from NADH to the respiratory chain. The immediate electron acceptor for the enzyme is believed to be ubiquinone. In Drosophila melanogaster (Fruit fly), this protein is NADH-ubiquinone oxidoreductase chain 4 (mt:ND4).